Here is a 521-residue protein sequence, read N- to C-terminus: Histidine--tRNA ligase (521 aa).

L-histidine contacts are provided by residues 137–139 (DLT), Arg164, Gln180, Asp184, Arg338, and 342–343 (YY).

The protein belongs to the class-II aminoacyl-tRNA synthetase family.

It carries out the reaction tRNA(His) + L-histidine + ATP = L-histidyl-tRNA(His) + AMP + diphosphate + H(+). Involved in protein synthesis. Catalyzes the specific attachment of an amino acid to its cognate tRNA in a 2 step reaction: the amino acid (AA) is first activated by ATP to form AA-AMP and then transferred to the acceptor end of the tRNA. Required for germ cell development. The sequence is that of Histidine--tRNA ligase from Caenorhabditis elegans.